A 316-amino-acid polypeptide reads, in one-letter code: MGERKGQNKYYPPDYDPKKGGLNKFQGTHALRERARKIHLGIIIIRFEMPYNIWCDGCKNHIGMGVRYNAEKTKVGMYYTTPVFKFRMKCHLCDNHFEIQTDPGNLDYVILSGARRQENRWDPLQNEQVVPETKEVQKRLFDDAMYKLEHQAKDAKAGADARPVLQKLVERNMSVWDDSYMANSRLRAEFRQQKKEINGQQELDRQLLAKSSLDIALLPETTQDREMAALMKLQTKSALERESEQRLELLMRPALPGATVTTFGGLKRQKVLNTQLQVQDLGIRRKKLEETTSSATNEKPISLVGDYSSSDNDSNG.

Residues 182 to 203 adopt a coiled-coil conformation; the sequence is ANSRLRAEFRQQKKEINGQQEL. The tract at residues 287–316 is disordered; the sequence is KLEETTSSATNEKPISLVGDYSSSDNDSNG.

The protein belongs to the CWC16 family.

This is Coiled-coil domain-containing protein 130 homolog from Drosophila melanogaster (Fruit fly).